The chain runs to 462 residues: Bifunctional dihydrofolate reductase-thymidylate synthase (462 aa).

Residues 6–165 (TFSMVLAMTL…INYDYQHLIN (160 aa)) form the DHFR domain. Val10 lines the substrate pocket. NADP(+)-binding positions include Ala12 and 18–24 (GIGYQNR). Asp32 contacts substrate. NADP(+) contacts are provided by residues 49 to 51 (RKT) and 68 to 71 (ISKN). Ile101 contributes to the substrate binding site. 102 to 109 (GGKRIFEE) is a binding site for NADP(+). Residue Thr122 coordinates substrate. Positions 180–462 (ENQYLDMITK…HDKIEMKMAV (283 aa)) are thymidylate synthase. Arg200 is a dUMP binding site. The active site involves Cys345. Residues His346, 364-368 (QRSCD), Asn376, and 406-408 (HIY) contribute to the dUMP site.

In the N-terminal section; belongs to the dihydrofolate reductase family. The protein in the C-terminal section; belongs to the thymidylate synthase family.

The enzyme catalyses (6S)-5,6,7,8-tetrahydrofolate + NADP(+) = 7,8-dihydrofolate + NADPH + H(+). The catalysed reaction is dUMP + (6R)-5,10-methylene-5,6,7,8-tetrahydrofolate = 7,8-dihydrofolate + dTMP. It functions in the pathway cofactor biosynthesis; tetrahydrofolate biosynthesis; 5,6,7,8-tetrahydrofolate from 7,8-dihydrofolate: step 1/1. Bifunctional enzyme. Involved in de novo dTMP biosynthesis. Key enzyme in folate metabolism. Catalyzes an essential reaction for de novo glycine and purine synthesis, DNA precursor synthesis, and for the conversion of dUMP to dTMP. The protein is Bifunctional dihydrofolate reductase-thymidylate synthase of Paramecium tetraurelia.